The following is a 191-amino-acid chain: NAD(P)H dehydrogenase (quinone) (191 aa).

The Flavodoxin-like domain occupies 4-184 (ILVIFHSITG…VAKMLGKRVA (181 aa)). FMN-binding positions include 10–15 (SITGNT), 83–85 (TRF), and 118–124 (SNEMPHG).

The protein belongs to the WrbA family. Homodimer and homotetramer; in equilibrium. It depends on FMN as a cofactor.

It carries out the reaction a quinone + NADH + H(+) = a quinol + NAD(+). It catalyses the reaction a quinone + NADPH + H(+) = a quinol + NADP(+). Functionally, it seems to function in response to environmental stress when various electron transfer chains are affected or when the environment is highly oxidizing. It reduces quinones to the hydroquinone state to prevent interaction of the semiquinone with O2 and production of superoxide. It prefers NADH over NADPH. This is NAD(P)H dehydrogenase (quinone) from Archaeoglobus fulgidus (strain ATCC 49558 / DSM 4304 / JCM 9628 / NBRC 100126 / VC-16).